The chain runs to 346 residues: Tetraacyldisaccharide 4'-kinase (346 aa).

ATP is bound at residue 54-61 (TVGGAGKT).

It belongs to the LpxK family.

It catalyses the reaction a lipid A disaccharide + ATP = a lipid IVA + ADP + H(+). The protein operates within glycolipid biosynthesis; lipid IV(A) biosynthesis; lipid IV(A) from (3R)-3-hydroxytetradecanoyl-[acyl-carrier-protein] and UDP-N-acetyl-alpha-D-glucosamine: step 6/6. In terms of biological role, transfers the gamma-phosphate of ATP to the 4'-position of a tetraacyldisaccharide 1-phosphate intermediate (termed DS-1-P) to form tetraacyldisaccharide 1,4'-bis-phosphate (lipid IVA). The chain is Tetraacyldisaccharide 4'-kinase from Rhizobium meliloti (strain 1021) (Ensifer meliloti).